A 499-amino-acid polypeptide reads, in one-letter code: U4/U6 small nuclear ribonucleoprotein Prp31 (499 aa).

The tract at residues 1–43 (MSLADELLADLEEAAEEEEGGSYGEEEEEPAIEDVQEETQLDL) is disordered. Acidic residues predominate over residues 7 to 40 (LLADLEEAAEEEEGGSYGEEEEEPAIEDVQEETQ). Coiled-coil stretches lie at residues 85–120 (EAAP…KYSK) and 181–215 (DEEL…MSFI). One can recognise a Nop domain in the interval 215-333 (IAPNLSIIIG…IERKFDKWQE (119 aa)). Residues 334-357 (PPPVKQVKPLPAPLDGQRKKRGGR) form a disordered region. The Nuclear localization signal (NLS) signature appears at 351–364 (RKKRGGRRYRKMKE). Phosphoserine occurs at positions 379, 395, and 432. An N6-acetyllysine modification is found at K438. Position 439 is a phosphoserine (S439). T440 carries the phosphothreonine modification. Residue S450 is modified to Phosphoserine. T455 carries the phosphothreonine modification. Glycyl lysine isopeptide (Lys-Gly) (interchain with G-Cter in SUMO2) cross-links involve residues K471 and K478.

Belongs to the PRP31 family. Identified in the spliceosome B complex. Component of the U4/U6-U5 tri-snRNP complex composed of the U4, U6 and U5 snRNAs and at least PRPF3, PRPF4, PRPF6, PRPF8, PRPF31, SNRNP200, TXNL4A, SNRNP40, DDX23, CD2BP2, PPIH, SNU13, EFTUD2, SART1 and USP39. Interacts with a complex formed by SNU13 and U4 snRNA, but not with SNU13 or U4 snRNA alone. The complex formed by SNU13 and PRPF31 also binds U4atac snRNA, a characteristic component of specific, less abundant spliceosomal complexes. Interacts with PRPF6/U5 snRNP-associated 102 kDa protein. Component of some MLL1/MLL complex, at least composed of the core components KMT2A/MLL1, ASH2L, HCFC1/HCF1, WDR5 and RBBP5, as well as the facultative components BACC1, CHD8, E2F6, HSP70, INO80C, KANSL1, LAS1L, MAX, MCRS1, MGA, KAT8/MOF, PELP1, PHF20, PRP31, RING2, RUVB1/TIP49A, RUVB2/TIP49B, SENP3, TAF1, TAF4, TAF6, TAF7, TAF9 and TEX10. Interacts (via its NLS) with CTNNBL1. Interacts with USH1G. Post-translationally, phosphorylated by PRP4K during spliceosome assembly.

The protein resides in the nucleus. The protein localises to the nucleus speckle. It localises to the cajal body. Functionally, involved in pre-mRNA splicing as component of the spliceosome. Required for the assembly of the U4/U5/U6 tri-snRNP complex, one of the building blocks of the spliceosome. The sequence is that of U4/U6 small nuclear ribonucleoprotein Prp31 (Prpf31) from Mus musculus (Mouse).